Consider the following 189-residue polypeptide: Elongation factor P (189 aa).

The protein belongs to the elongation factor P family.

It localises to the cytoplasm. It participates in protein biosynthesis; polypeptide chain elongation. Involved in peptide bond synthesis. Stimulates efficient translation and peptide-bond synthesis on native or reconstituted 70S ribosomes in vitro. Probably functions indirectly by altering the affinity of the ribosome for aminoacyl-tRNA, thus increasing their reactivity as acceptors for peptidyl transferase. This chain is Elongation factor P, found in Rhizobium etli (strain ATCC 51251 / DSM 11541 / JCM 21823 / NBRC 15573 / CFN 42).